Here is a 128-residue protein sequence, read N- to C-terminus: SH2 domain-containing protein 1A (128 aa).

One can recognise an SH2 domain in the interval 6-102 (VYHGKISRET…GIVIPLQYPV (97 aa)). Residues 67-92 (ETAPGVHKRFFRKIKNLISAFQKPDQ) are interaction with FYN SH3 domain. An N6-acetyllysine modification is found at K89. The disordered stretch occupies residues 104-128 (KKPSARSTQGATGRRDDPDVFLKTP). A compositionally biased stretch (basic and acidic residues) spans 116–128 (GRRDDPDVFLKTP).

In terms of assembly, interacts with CD84, CD244, LY9, SLAMF1 and FYN. Interacts with NTRK1, NTRK2 and NTRK3.

The protein localises to the cytoplasm. Its function is as follows. Cytoplasmic adapter regulating receptors of the signaling lymphocytic activation molecule (SLAM) family such as SLAMF1, CD244, LY9, CD84, SLAMF6 and SLAMF7. In SLAM signaling seems to cooperate with SH2D1B/EAT-2. Initially it has been proposed that association with SLAMF1 prevents SLAMF1 binding to inhibitory effectors including INPP5D/SHIP1 and PTPN11/SHP-2. However, by simultaneous interactions, recruits FYN which subsequently phosphorylates and activates SLAMF1. Positively regulates CD244/2B4- and CD84-mediated natural killer (NK) cell functions. Can also promote CD48-, SLAMF6 -, LY9-, and SLAMF7-mediated NK cell activation. In the context of NK cell-mediated cytotoxicity enhances conjugate formation with target cells. May also regulate the activity of the neurotrophin receptors NTRK1, NTRK2 and NTRK3. This chain is SH2 domain-containing protein 1A (SH2D1A), found in Bos taurus (Bovine).